A 151-amino-acid chain; its full sequence is Ribosome maturation factor RimP (151 aa).

This sequence belongs to the RimP family.

The protein resides in the cytoplasm. Required for maturation of 30S ribosomal subunits. This chain is Ribosome maturation factor RimP, found in Desulfotalea psychrophila (strain LSv54 / DSM 12343).